A 217-amino-acid polypeptide reads, in one-letter code: Orotidine 5'-phosphate decarboxylase (217 aa).

Substrate-binding positions include aspartate 14, lysine 36, 64-73, serine 120, 172-182, glycine 197, and arginine 198; these read DFKVADIPST and PGVGAQGGNLS. Lysine 66 functions as the Proton donor in the catalytic mechanism.

Belongs to the OMP decarboxylase family. Type 1 subfamily. Homodimer.

It catalyses the reaction orotidine 5'-phosphate + H(+) = UMP + CO2. It functions in the pathway pyrimidine metabolism; UMP biosynthesis via de novo pathway; UMP from orotate: step 2/2. Catalyzes the decarboxylation of orotidine 5'-monophosphate (OMP) to uridine 5'-monophosphate (UMP). This Methanococcus maripaludis (strain C6 / ATCC BAA-1332) protein is Orotidine 5'-phosphate decarboxylase.